The following is a 146-amino-acid chain: D-aminoacyl-tRNA deacylase (146 aa).

Positions 137–138 match the Gly-cisPro motif, important for rejection of L-amino acids motif; it reads GP.

The protein belongs to the DTD family. As to quaternary structure, homodimer.

It is found in the cytoplasm. It catalyses the reaction glycyl-tRNA(Ala) + H2O = tRNA(Ala) + glycine + H(+). It carries out the reaction a D-aminoacyl-tRNA + H2O = a tRNA + a D-alpha-amino acid + H(+). An aminoacyl-tRNA editing enzyme that deacylates mischarged D-aminoacyl-tRNAs. Also deacylates mischarged glycyl-tRNA(Ala), protecting cells against glycine mischarging by AlaRS. Acts via tRNA-based rather than protein-based catalysis; rejects L-amino acids rather than detecting D-amino acids in the active site. By recycling D-aminoacyl-tRNA to D-amino acids and free tRNA molecules, this enzyme counteracts the toxicity associated with the formation of D-aminoacyl-tRNA entities in vivo and helps enforce protein L-homochirality. The sequence is that of D-aminoacyl-tRNA deacylase from Acinetobacter baylyi (strain ATCC 33305 / BD413 / ADP1).